A 320-amino-acid polypeptide reads, in one-letter code: Lipoyl synthase (320 aa).

[4Fe-4S] cluster contacts are provided by Cys-67, Cys-72, Cys-78, Cys-93, Cys-97, Cys-100, and Ser-307. The region spanning Phe-79–Glu-296 is the Radical SAM core domain.

It belongs to the radical SAM superfamily. Lipoyl synthase family. The cofactor is [4Fe-4S] cluster.

It is found in the cytoplasm. The enzyme catalyses [[Fe-S] cluster scaffold protein carrying a second [4Fe-4S](2+) cluster] + N(6)-octanoyl-L-lysyl-[protein] + 2 oxidized [2Fe-2S]-[ferredoxin] + 2 S-adenosyl-L-methionine + 4 H(+) = [[Fe-S] cluster scaffold protein] + N(6)-[(R)-dihydrolipoyl]-L-lysyl-[protein] + 4 Fe(3+) + 2 hydrogen sulfide + 2 5'-deoxyadenosine + 2 L-methionine + 2 reduced [2Fe-2S]-[ferredoxin]. It functions in the pathway protein modification; protein lipoylation via endogenous pathway; protein N(6)-(lipoyl)lysine from octanoyl-[acyl-carrier-protein]: step 2/2. Catalyzes the radical-mediated insertion of two sulfur atoms into the C-6 and C-8 positions of the octanoyl moiety bound to the lipoyl domains of lipoate-dependent enzymes, thereby converting the octanoylated domains into lipoylated derivatives. The protein is Lipoyl synthase of Glaesserella parasuis serovar 5 (strain SH0165) (Haemophilus parasuis).